Consider the following 362-residue polypeptide: Protein BIG GRAIN 1-like D (362 aa).

Disordered stretches follow at residues 22 to 113, 132 to 168, and 303 to 327; these read IDPK…TLFH, KFNRHDENWENTRNRRSVKSSGNQKKPKTPASPGGRI, and VKTNGFEDYEDDDEDDDDDDVASDS. A compositionally biased stretch (polar residues) spans 23 to 47; it reads DPKTQKTQPYVGSVNTTTKKQSIVT. The segment covering 50–60 has biased composition (basic and acidic residues); the sequence is VPDRKIHRDRF. Residues 63-78 show a composition bias toward low complexity; the sequence is SVSSSSDSNSSIFSSS. The segment covering 132-144 has biased composition (basic and acidic residues); that stretch reads KFNRHDENWENTR. Acidic residues predominate over residues 309–324; the sequence is EDYEDDDEDDDDDDVA.

The protein belongs to the BIG GRAIN 1 (BG1) plant protein family.

The protein resides in the cell membrane. In terms of biological role, involved in auxin transport. Regulator of the auxin signaling pathway. This Arabidopsis thaliana (Mouse-ear cress) protein is Protein BIG GRAIN 1-like D.